We begin with the raw amino-acid sequence, 483 residues long: (R)-mandelonitrile beta-glucosyltransferase (483 aa).

H22 functions as the Proton acceptor in the catalytic mechanism. Residue H22 participates in an anthocyanidin binding. D124 functions as the Charge relay in the catalytic mechanism. Residues T146, Q363, H378, W381, N382, S383, and E386 each coordinate UDP-alpha-D-glucose. A401 contributes to the an anthocyanidin binding site. The UDP-alpha-D-glucose site is built by E402 and Q403.

This sequence belongs to the UDP-glycosyltransferase family.

The catalysed reaction is (R)-mandelonitrile + UDP-alpha-D-glucose = (R)-prunasin + UDP + H(+). In terms of biological role, involved in the biosynthesis of the cyanogenic glycoside (R)-prunasin, a precursor of (R)-amygdalin, which at high concentrations is associated with intense bitterness in kernels of almond. Stereo-selectively glucosylates (R)-mandelonitrile to produce (R)-prunasin. This chain is (R)-mandelonitrile beta-glucosyltransferase, found in Prunus dulcis (Almond).